Reading from the N-terminus, the 514-residue chain is Probable transposase for insertion sequence element IS1353 (514 aa).

A coiled-coil region spans residues 172-216; sequence KGDTSLEQRHEALLRELAELESQNQRLRMENAILEKASELIKKDM. In terms of domain architecture, Integrase catalytic spans 346 to 510; sequence HASAPNTKWL…SPIEYRHAVG (165 aa). Residues Asp357 and Asp417 each contribute to the Mg(2+) site.

The protein belongs to the transposase 8 family.

Probably involved in the transposition of insertion sequence IS1353. In Shigella flexneri, this protein is Probable transposase for insertion sequence element IS1353.